A 294-amino-acid chain; its full sequence is Phosphoprotein (294 aa).

Residues 12–28 are binding to monomeric RNA-free nucleoprotein; it reads MGNEAAKAAEAFQRSLK. The tract at residues 52 to 97 is disordered; sequence KPTISKSTKVTTPPERRNAWGEKPDTTRNQTEEARNEATLEDTSRL. Basic and acidic residues predominate over residues 65 to 97; it reads PERRNAWGEKPDTTRNQTEEARNEATLEDTSRL. Residue S106 is modified to Phosphoserine. Residues 123–128 form a binding to host phosphatase PP1 region; it reads KKKVTF. A binding to protein M2-1 region spans residues 135–157; it reads RYTKLEMEALELLSDNEDDDAES. A phosphoserine mark is found at S148, S157, S158, S168, and S171. The tract at residues 169-194 is oligomerization and binding to RNA-directed RNA polymerase L; it reads ALSLEARLESIDEKLSMILGLLRTLN. A disordered region spans residues 234 to 294; it reads MKEEAKQKSK…PDDDLYSLTM (61 aa). Residues 251–279 are binding to RNA-directed RNA polymerase L; it reads LTEKAKELNKIVEDESTSGESEEEEEEED. A compositionally biased stretch (basic and acidic residues) spans 253-263; it reads EKAKELNKIVE. Residues 264-294 show a composition bias toward acidic residues; it reads DESTSGESEEEEEEEDEEESNPDDDLYSLTM. Positions 281–294 are binding to the N-RNA complex; sequence EESNPDDDLYSLTM.

Belongs to the pneumoviridae phosphoprotein P family. In terms of assembly, homotetramer. Interacts with protein M2-1; the interaction between the two tetramers is required for the anti-termination and elongation transcriptional activities of protein M2-1. Interacts with host phosphatase PP1; this interaction recruits PP1 to the inclusion bodies. Formation of a complex PP1/M2-1/P allows P to target host PP1 phosphatase to the M2-1 substrate. Interacts with the nucleoprotein N; the phosphorylated phosphoprotein P binds to N-RNA complex. Interacts with the monomeric RNA-free nucleoprotein N. Interacts with RNA-directed RNA polymerase L (via N-terminus); the association of P and L forms the polymerase complex. Constitutively phosphorylated by host.

The protein localises to the virion. It is found in the host cytoplasm. Its function is as follows. Plays critical roles in regulating RNA replication and transcription through its interactions with multiple proteins. Tethers the RNA-directed RNA polymerase L to the nucleoprotein-RNA complex. Recruits the M2-1 protein, a processivity factor that is required for efficient transcription of viral RNA. Acts as a chaperone for neo-synthesized nucleoprotein by forming an N-P complex that preserves N in a monomeric and RNA-free state and prevents the association of nascent N with host cell RNAs. Recruits the host phosphatase PP1 to inclusion bodies to regulate viral transcription. The sequence is that of Phosphoprotein from Avian metapneumovirus (isolate Canada goose/Minnesota/15a/2001) (AMPV).